The sequence spans 189 residues: Phosphomevalonate kinase (189 aa).

ATP-binding positions include 10–16 and Arg-138; that span reads KRKCGKD. Asn-168 contributes to the substrate binding site.

It is found in the cytoplasm. Its subcellular location is the cytosol. The enzyme catalyses (R)-5-phosphomevalonate + ATP = (R)-5-diphosphomevalonate + ADP. It functions in the pathway isoprenoid biosynthesis; isopentenyl diphosphate biosynthesis via mevalonate pathway; isopentenyl diphosphate from (R)-mevalonate: step 2/3. The sequence is that of Phosphomevalonate kinase from Drosophila melanogaster (Fruit fly).